The chain runs to 874 residues: Probable inorganic carbon transporter subunit DabA (874 aa).

Positions 398, 400, 580, and 595 each coordinate Zn(2+).

This sequence belongs to the inorganic carbon transporter (TC 9.A.2) DabA family. Forms a complex with DabB. The cofactor is Zn(2+).

It is found in the cell membrane. Part of an energy-coupled inorganic carbon pump. This is Probable inorganic carbon transporter subunit DabA from Bacillus cereus (strain AH820).